The chain runs to 67 residues: Small ribosomal subunit protein bS21 (67 aa).

This sequence belongs to the bacterial ribosomal protein bS21 family.

This Desulfovibrio desulfuricans (strain ATCC 27774 / DSM 6949 / MB) protein is Small ribosomal subunit protein bS21.